A 214-amino-acid chain; its full sequence is Nodulation protein A (214 aa).

Belongs to the NodA family.

Its subcellular location is the cytoplasm. Functionally, N-acyltransferase required for nodulation. Acts in the production of a small, heat-stable compound (Nod) that stimulates mitosis in various plant protoplasts. This chain is Nodulation protein A, found in Methylobacterium nodulans (strain LMG 21967 / CNCM I-2342 / ORS 2060).